A 166-amino-acid chain; its full sequence is MPDAEQLPDGWEKRTSRSTGMSYYLNMYTKESQWDQPTEPAKKAGGGSAGGGDAPDEVHCLHLLVKHKGSRRPSSWREANITRTKEEAQLLLEVYRNKIVQQEATFDELARSYSDCSSAKRGGDLGKFGRGQMQAAFEDAAFKLNVNQLSGIVDSDSGLHIILRKA.

Residues 5-39 (EQLPDGWEKRTSRSTGMSYYLNMYTKESQWDQPTE) enclose the WW domain. Positions 32-53 (SQWDQPTEPAKKAGGGSAGGGD) are disordered. The segment covering 44–53 (AGGGSAGGGD) has biased composition (gly residues). One can recognise a PpiC domain in the interval 55–166 (PDEVHCLHLL…SGLHIILRKA (112 aa)).

The catalysed reaction is [protein]-peptidylproline (omega=180) = [protein]-peptidylproline (omega=0). This is Putative peptidyl-prolyl cis-trans isomerase dodo (dod) from Drosophila melanogaster (Fruit fly).